An 87-amino-acid chain; its full sequence is Acyl-CoA-binding protein (87 aa).

Serine 2 carries the N-acetylserine modification. The ACB domain occupies 2-87 (SQAEFEKAAE…VEELKKKYGI (86 aa)). Lysine 8 carries the post-translational modification N6-acetyllysine; alternate. Lysine 8 carries the N6-succinyllysine; alternate modification. Lysine 14 contacts an acyl-CoA. Position 17 is an N6-succinyllysine (lysine 17). Lysine 19 is subject to N6-acetyllysine. Position 29 is a phosphotyrosine (tyrosine 29). Residues 29–33 (YSHYK), lysine 51, lysine 55, and tyrosine 74 contribute to the an acyl-CoA site. An N6-acetyllysine modification is found at lysine 51. N6-acetyllysine; alternate is present on lysine 55. Lysine 55 carries the N6-succinyllysine; alternate modification. Residue lysine 55 is modified to N6-(2-hydroxyisobutyryl)lysine; alternate. An N6-malonyllysine; alternate modification is found at lysine 55. Lysine 77 bears the N6-acetyllysine; alternate mark. At lysine 77 the chain carries N6-succinyllysine; alternate.

This sequence belongs to the ACBP family. As to quaternary structure, monomer.

The protein resides in the endoplasmic reticulum. It is found in the golgi apparatus. Functionally, binds medium- and long-chain acyl-CoA esters with very high affinity and may function as an intracellular carrier of acyl-CoA esters. It is also able to displace diazepam from the benzodiazepine (BZD) recognition site located on the GABA type A receptor. It is therefore possible that this protein also acts as a neuropeptide to modulate the action of the GABA receptor. In terms of biological role, DBI(32-86) has antibacterial properties. The polypeptide is Acyl-CoA-binding protein (DBI) (Sus scrofa (Pig)).